The following is a 920-amino-acid chain: Plasma membrane ATPase (920 aa).

The tract at residues 1–77 (MADHSASGAP…TPGGGRVVPE (77 aa)) is disordered. The Cytoplasmic segment spans residues 1–115 (MADHSASGAP…KEEKENHFLK (115 aa)). Residues 38–51 (EDDEDEDIDALIED) are compositionally biased toward acidic residues. The chain crosses the membrane as a helical span at residues 116–138 (FLGFFVGPIQFVMEGAAVLAAGL). The Extracellular segment spans residues 139–140 (ED). The chain crosses the membrane as a helical span at residues 141 to 160 (WVDFGVICGLLLLNAVVGFV). Topologically, residues 161–291 (QEFQAGSIVD…GSGHFTEVLN (131 aa)) are cytoplasmic. A helical transmembrane segment spans residues 292-314 (GIGTILLILVIFTLLIVWVSSFY). The Extracellular segment spans residues 315-321 (RSNPIVQ). The helical transmembrane segment at 322 to 354 (ILEFTLAITIIGVPVGLPAVVTTTMAVGAAYLA) threads the bilayer. At 355–687 (KKKAIVQKLS…LKTSRQIFHR (333 aa)) the chain is on the cytoplasmic side. Asp-378 acts as the 4-aspartylphosphate intermediate in catalysis. Mg(2+) contacts are provided by Asp-634 and Asp-638. The chain crosses the membrane as a helical span at residues 688-713 (MYAYVVYRIALSIHLEIFLGLWIAIL). At 714-720 (NRSLNIE) the chain is on the extracellular side. Residues 721–738 (LVVFIAIFADVATLAIAY) form a helical membrane-spanning segment. Topologically, residues 739–754 (DNAPYSQTPVKWNLPK) are cytoplasmic. The chain crosses the membrane as a helical span at residues 755–779 (LWGMSVLLGVVLAVGTWITVTTMYA). Residues 780–806 (QGENGGIVQNFGNMDEVLFLQISLTEN) lie on the Extracellular side of the membrane. The next 2 helical transmembrane spans lie at 807–826 (WLIF…PSWQ) and 827–847 (LSGA…WGWF). Topologically, residues 848 to 853 (EHSDTS) are extracellular. Residues 854–878 (IVAVVRIWIFSFGIFCIMGGVYYIL) form a helical membrane-spanning segment. Residues 879-920 (QDSVGFDNLMHGKSPKGNQKQRSLEDFVVSLQRVSTQHEKSQ) are Cytoplasmic-facing.

Belongs to the cation transport ATPase (P-type) (TC 3.A.3) family. Type IIIA subfamily.

It localises to the cell membrane. It catalyses the reaction ATP + H2O + H(+)(in) = ADP + phosphate + 2 H(+)(out). Its function is as follows. The plasma membrane ATPase of plants and fungi is a hydrogen ion pump. The proton gradient it generates drives the active transport of nutrients by H(+)-symport. The resulting external acidification and/or internal alkinization may mediate growth responses. The sequence is that of Plasma membrane ATPase (pma-1) from Neurospora crassa (strain ATCC 24698 / 74-OR23-1A / CBS 708.71 / DSM 1257 / FGSC 987).